Here is a 380-residue protein sequence, read N- to C-terminus: Gap junction gamma-1 protein (380 aa).

Residues 1-22 (MSWSFLTRLLDEISNHSTFVGK) lie on the Cytoplasmic side of the membrane. Residues 23–45 (IWLTLFIIFRIVLTVVGGESIYY) form a helical membrane-spanning segment. Over 46 to 75 (DEQSKFVCNTQQPGCENVCYDAFAPLSHVR) the chain is Extracellular. A helical transmembrane segment spans residues 76–95 (FWVFQIILITTPTIMYLGFA). Over 96–171 (MHKIARSNDV…RRIKRDGLMK (76 aa)) the chain is Cytoplasmic. A helical transmembrane segment spans residues 172–194 (VYILQLLSRIIFEVGFLFGQYIL). The Extracellular portion of the chain corresponds to 195 to 228 (YGFEVAPSYVCTRSPCPHTVDCFVSRPTEKTIFL). The chain crosses the membrane as a helical span at residues 229–251 (LIMYAVSCLCLSLTVLEILHLGL). The Cytoplasmic segment spans residues 252-380 (SGIRDAFRRR…GSKCEKGIHA (129 aa)). The disordered stretch occupies residues 337-380 (AYQNGESSPSRSSSPESNGTAVEQNRLNFAQEKQGSKCEKGIHA). Residues 342 to 353 (ESSPSRSSSPES) show a composition bias toward low complexity. The span at 354–369 (NGTAVEQNRLNFAQEK) shows a compositional bias: polar residues. The segment covering 370–380 (QGSKCEKGIHA) has biased composition (basic and acidic residues).

It belongs to the connexin family. Gamma-type subfamily. As to quaternary structure, a connexon is composed of a hexamer of connexins.

The protein resides in the cell membrane. It localises to the cell junction. Its subcellular location is the gap junction. Functionally, one gap junction consists of a cluster of closely packed pairs of transmembrane channels, the connexons, through which materials of low MW diffuse from one cell to a neighboring cell. Participates in a developmental pathway for formation of the notochord and tail. The protein is Gap junction gamma-1 protein (gjc1) of Danio rerio (Zebrafish).